The sequence spans 411 residues: Tyrosine--tRNA ligase (411 aa).

L-tyrosine is bound at residue Y33. The short motif at 38-47 (PTAESLHLGN) is the 'HIGH' region element. Residues Y160 and Q164 each coordinate L-tyrosine. A 'KMSKS' region motif is present at residues 222–226 (KIGKS). Residue K225 coordinates ATP. An S4 RNA-binding domain is found at 347-411 (SVIETLIKNK…KKQVILFKTV (65 aa)).

The protein belongs to the class-I aminoacyl-tRNA synthetase family. TyrS type 1 subfamily. As to quaternary structure, homodimer.

It is found in the cytoplasm. The enzyme catalyses tRNA(Tyr) + L-tyrosine + ATP = L-tyrosyl-tRNA(Tyr) + AMP + diphosphate + H(+). In terms of biological role, catalyzes the attachment of tyrosine to tRNA(Tyr) in a two-step reaction: tyrosine is first activated by ATP to form Tyr-AMP and then transferred to the acceptor end of tRNA(Tyr). This Mycoplasmopsis agalactiae (strain NCTC 10123 / CIP 59.7 / PG2) (Mycoplasma agalactiae) protein is Tyrosine--tRNA ligase.